A 356-amino-acid chain; its full sequence is DNA polymerase IV (356 aa).

The UmuC domain occupies 7 to 188; the sequence is IIHIDMDCFY…LPLKKIPRVG (182 aa). Positions 11 and 106 each coordinate Mg(2+). Residue Glu-107 is part of the active site.

This sequence belongs to the DNA polymerase type-Y family. In terms of assembly, monomer. It depends on Mg(2+) as a cofactor.

It localises to the cytoplasm. The enzyme catalyses DNA(n) + a 2'-deoxyribonucleoside 5'-triphosphate = DNA(n+1) + diphosphate. Functionally, poorly processive, error-prone DNA polymerase involved in untargeted mutagenesis. Copies undamaged DNA at stalled replication forks, which arise in vivo from mismatched or misaligned primer ends. These misaligned primers can be extended by PolIV. Exhibits no 3'-5' exonuclease (proofreading) activity. May be involved in translesional synthesis, in conjunction with the beta clamp from PolIII. In Actinobacillus pleuropneumoniae serotype 5b (strain L20), this protein is DNA polymerase IV.